The sequence spans 784 residues: Replication protein A 70 kDa DNA-binding subunit E (784 aa).

Residues 114–224 (HPVPGGKHND…NRGPVARNEA (111 aa)) are disordered. Polar residues-rich tracts occupy residues 132–148 (KFNT…QVNN) and 167–190 (SSVP…NGVT). A DNA-binding region (OB) is located at residues 241 to 327 (WTIKARVTNK…RNDYEIMLDN (87 aa)). The C4-type zinc finger occupies 532 to 558 (CPIMNGDRPCSKKVTDNGDGTWRCEKC). 2 disordered regions span residues 678 to 707 (LPIN…PSSV) and 746 to 784 (AKCP…VGSY). Residues 695–707 (GIGSSGTRDPSSV) are compositionally biased toward polar residues. Residues 760–776 (YMGGSYRGTTGSYGGGL) show a composition bias toward gly residues.

It belongs to the replication factor A protein 1 family. In terms of assembly, heterotrimer of RPA1, RPA2 and RPA3 (canonical replication protein A complex).

The protein resides in the nucleus. In terms of biological role, component of the replication protein A complex (RPA) required for DNA recombination, repair and replication. The activity of RPA is mediated by single-stranded DNA binding and protein interactions. Probably involved in repair of double-strand DNA breaks (DSBs) induced by genotoxic stresses. This is Replication protein A 70 kDa DNA-binding subunit E (RPA1E) from Arabidopsis thaliana (Mouse-ear cress).